A 448-amino-acid chain; its full sequence is Trigger factor (448 aa).

The region spanning 160–245 (GDMLLMKVES…IQEIREEKLP (86 aa)) is the PPIase FKBP-type domain.

It belongs to the FKBP-type PPIase family. Tig subfamily.

Its subcellular location is the cytoplasm. It catalyses the reaction [protein]-peptidylproline (omega=180) = [protein]-peptidylproline (omega=0). In terms of biological role, involved in protein export. Acts as a chaperone by maintaining the newly synthesized protein in an open conformation. Functions as a peptidyl-prolyl cis-trans isomerase. The chain is Trigger factor from Dehalococcoides mccartyi (strain ATCC BAA-2266 / KCTC 15142 / 195) (Dehalococcoides ethenogenes (strain 195)).